Reading from the N-terminus, the 92-residue chain is Small ribosomal subunit protein bS18 (92 aa).

This sequence belongs to the bacterial ribosomal protein bS18 family. Part of the 30S ribosomal subunit. Forms a tight heterodimer with protein bS6.

In terms of biological role, binds as a heterodimer with protein bS6 to the central domain of the 16S rRNA, where it helps stabilize the platform of the 30S subunit. This Pelagibacter ubique (strain HTCC1062) protein is Small ribosomal subunit protein bS18.